A 487-amino-acid chain; its full sequence is Cytochrome P450 716A75 (487 aa).

The helical transmembrane segment at 5 to 25 (FVSLLSLFLLILLPLSLLFLF) threads the bilayer. Cys-434 lines the heme pocket.

The protein belongs to the cytochrome P450 family. The cofactor is heme.

The protein resides in the membrane. The enzyme catalyses beta-amyrin + reduced [NADPH--hemoprotein reductase] + O2 = erythrodiol + oxidized [NADPH--hemoprotein reductase] + H2O + H(+). The catalysed reaction is erythrodiol + reduced [NADPH--hemoprotein reductase] + O2 = oleanolic aldehyde + oxidized [NADPH--hemoprotein reductase] + 2 H2O + H(+). It carries out the reaction oleanolic aldehyde + reduced [NADPH--hemoprotein reductase] + O2 = oleanolate + oxidized [NADPH--hemoprotein reductase] + H2O + 2 H(+). Catalyzes the C-28 oxidation of beta-amyrin to form erythrodiol. Catalyzes the C-28 oxidation of erythrodiol to form oleanolic aldehyde. Catalyzes the C-28 oxidation of oleanolic aldehyde to form oleanolate. The sequence is that of Cytochrome P450 716A75 from Maesa lanceolata (False assegai).